Here is a 225-residue protein sequence, read N- to C-terminus: Uridylate kinase (225 aa).

ATP is bound at residue 7–11 (KISGS). Gly-44 contacts UMP. The ATP site is built by Gly-45 and Arg-49. Residues Asp-66 and 114 to 120 (FQPGQST) contribute to the UMP site. ATP-binding residues include Tyr-147 and Glu-150.

It belongs to the UMP kinase family. As to quaternary structure, homohexamer.

The protein localises to the cytoplasm. It carries out the reaction UMP + ATP = UDP + ADP. The protein operates within pyrimidine metabolism; CTP biosynthesis via de novo pathway; UDP from UMP (UMPK route): step 1/1. Inhibited by UTP. Functionally, catalyzes the reversible phosphorylation of UMP to UDP. The protein is Uridylate kinase of Aeropyrum pernix (strain ATCC 700893 / DSM 11879 / JCM 9820 / NBRC 100138 / K1).